Consider the following 903-residue polypeptide: DNA-directed DNA polymerase (903 aa).

Positions 103 to 340 are 3'-5'exonuclease; sequence YDHTKIRVAN…VLQIDAKRQF (238 aa). Mg(2+) is bound by residues Asp-114, Glu-116, and Asp-222. A beta hairpin region spans residues 248-264; that stretch reads TRVKVIENMYGSREIIT. Mg(2+)-binding residues include Asp-327, Asp-411, and Leu-412. The polymerase stretch occupies residues 380–903; that stretch reads IPQGRSHPVQ…KASLFDMFDF (524 aa). Residues 414-416, Arg-482, and Lys-560 contribute to the substrate site; that span reads SLY. Mg(2+) is bound at residue Asp-623. The tract at residues 705 to 708 is binding of DNA in B-conformation; that stretch reads KKRY. An interaction with the polymerase clamp region spans residues 897–903; sequence LFDMFDF.

The protein belongs to the DNA polymerase type-B family. In terms of assembly, part of the replicase complex that includes the DNA polymerase, the polymerase clamp, the clamp loader complex, the single-stranded DNA binding protein, and the primase/helicase. Interacts with the polymerase clamp; this interaction constitutes the polymerase holoenzyme. Mg(2+) is required as a cofactor.

The catalysed reaction is DNA(n) + a 2'-deoxyribonucleoside 5'-triphosphate = DNA(n+1) + diphosphate. Replicates the viral genomic DNA. This polymerase possesses two enzymatic activities: DNA synthesis (polymerase) and an exonucleolytic activity that degrades single-stranded DNA in the 3'- to 5'-direction for proofreading purpose. This is DNA-directed DNA polymerase (43) from Escherichia coli (Bacteriophage RB69).